The primary structure comprises 36 residues: Pancreatic polypeptide (36 aa).

Tyrosine 36 carries the tyrosine amide modification.

It belongs to the NPY family.

The protein resides in the secreted. In terms of biological role, hormone secreted by pancreatic cells that acts as a regulator of pancreatic and gastrointestinal functions probably by signaling through the G protein-coupled receptor NPY4R2. The chain is Pancreatic polypeptide (PPY) from Macaca mulatta (Rhesus macaque).